Reading from the N-terminus, the 554-residue chain is Probable phospholipase D F09G2.8 (554 aa).

The Cytoplasmic segment spans residues 1-123 (MPLRLINFRQ…GNSRNRIIKP (123 aa)). A helical; Signal-anchor for type II membrane protein membrane pass occupies residues 124–144 (ACVPISIVSLFIIALVFLPLF). The Extracellular segment spans residues 145 to 554 (NEEDLASPIK…DWNSEYSKDL (410 aa)). Asparagine 181, asparagine 208, asparagine 244, and asparagine 266 each carry an N-linked (GlcNAc...) asparagine glycan. Residues 272–299 (GSGIIHTKFILSDIATLYIGSANMDWKS) form the PLD phosphodiesterase 1 domain. Residues histidine 277, lysine 279, and aspartate 284 contribute to the active site. Asparagine 333, asparagine 350, asparagine 468, and asparagine 513 each carry an N-linked (GlcNAc...) asparagine glycan. One can recognise a PLD phosphodiesterase 2 domain in the interval 492-518 (FTRVNHAKYMVTEDIAYIGTSNWSGDY).

This sequence belongs to the phospholipase D family.

The protein resides in the membrane. It catalyses the reaction a 1,2-diacyl-sn-glycero-3-phosphocholine + H2O = a 1,2-diacyl-sn-glycero-3-phosphate + choline + H(+). This is Probable phospholipase D F09G2.8 from Caenorhabditis elegans.